The following is a 147-amino-acid chain: Large ribosomal subunit protein bL9 (147 aa).

Belongs to the bacterial ribosomal protein bL9 family.

In terms of biological role, binds to the 23S rRNA. The chain is Large ribosomal subunit protein bL9 from Bacteroides thetaiotaomicron (strain ATCC 29148 / DSM 2079 / JCM 5827 / CCUG 10774 / NCTC 10582 / VPI-5482 / E50).